A 715-amino-acid polypeptide reads, in one-letter code: Polyribonucleotide nucleotidyltransferase (715 aa).

Residues Asp-487 and Asp-493 each coordinate Mg(2+). Residues 554–613 enclose the KH domain; the sequence is PRIETFKIATDKIREVIGTGGKVIREIVEKTGAKVNIDDDGTVKVASSDGESIKAAIKWI. One can recognise an S1 motif domain in the interval 623–691; that stretch reads NAIYDGTVVK…DRGKTRLSMK (69 aa). The disordered stretch occupies residues 696 to 715; sequence ETGEDLEAKQKAAEGATAAE.

It belongs to the polyribonucleotide nucleotidyltransferase family. The cofactor is Mg(2+).

It is found in the cytoplasm. It carries out the reaction RNA(n+1) + phosphate = RNA(n) + a ribonucleoside 5'-diphosphate. Its function is as follows. Involved in mRNA degradation. Catalyzes the phosphorolysis of single-stranded polyribonucleotides processively in the 3'- to 5'-direction. The polypeptide is Polyribonucleotide nucleotidyltransferase (Rhodopseudomonas palustris (strain BisB18)).